The sequence spans 615 residues: Protein ENHANCED DISEASE RESISTANCE 4 (615 aa).

3 disordered regions span residues 46-271 (IAPS…DDDE), 292-336 (YKEQ…GRQG), and 549-592 (THDI…RGSP). 2 stretches are compositionally biased toward polar residues: residues 63 to 89 (NEPQ…SSPG) and 119 to 129 (GDGTNEIQEQE). Residues 104–129 (MESTEKELDDLELSNGDGTNEIQEQE) are a coiled coil. Basic and acidic residues predominate over residues 134–148 (DSEKNEREDNSRLES). Residues 159–168 (GSGSSSGSLS) show a composition bias toward low complexity. Polar residues-rich tracts occupy residues 296 to 314 (GASS…ITTY) and 552 to 564 (INAN…TSES). Positions 565 to 577 (PIDKAPSKPEKLR) are enriched in basic and acidic residues.

In terms of assembly, interacts with RLK902. Binds and recruits EDR1 at the powdery mildew (e.g. G.cichoracearum) penetration site on the plasma membrane. Interacts with CHC2. In terms of tissue distribution, expressed in stems and rosette leaves, and weakly in inflorescences. Not detected in roots.

It is found in the cell membrane. The protein resides in the endosome. Its function is as follows. Plays a negative role in salicylic acid (SA)-mediated resistance to powdery mildew (e.g. Golovinomyces cichoracearum). May modulate plant immunity by regulating the relocation of EDR1 by interacting with CHC2 and modulating endocytosis. The chain is Protein ENHANCED DISEASE RESISTANCE 4 from Arabidopsis thaliana (Mouse-ear cress).